The sequence spans 276 residues: ADP-dependent (S)-NAD(P)H-hydrate dehydratase (276 aa).

The region spanning 7-275 (TEEHVRATLP…DILPRVWKRF (269 aa)) is the YjeF C-terminal domain. (6S)-NADPHX-binding residues include Ala42, Gly104, and His149. AMP contacts are provided by residues 186–190 (KGNQT) and Gly215. Asp216 provides a ligand contact to (6S)-NADPHX.

This sequence belongs to the NnrD/CARKD family. Homotetramer. Mg(2+) serves as cofactor.

The catalysed reaction is (6S)-NADHX + ADP = AMP + phosphate + NADH + H(+). It carries out the reaction (6S)-NADPHX + ADP = AMP + phosphate + NADPH + H(+). Catalyzes the dehydration of the S-form of NAD(P)HX at the expense of ADP, which is converted to AMP. Together with NAD(P)HX epimerase, which catalyzes the epimerization of the S- and R-forms, the enzyme allows the repair of both epimers of NAD(P)HX, a damaged form of NAD(P)H that is a result of enzymatic or heat-dependent hydration. This is ADP-dependent (S)-NAD(P)H-hydrate dehydratase from Bacillus subtilis (strain 168).